The chain runs to 216 residues: MGGFLVLNSSNNVVRTVPSKKRKHPEYKSKIRELISGIRSDNLREAVRLPQGVDINEWFAMNTVDFFNQISLLYATLEEFCTQTTCPVMNAGRYEYRWADGTTITKPKTVSAPKYVEYLIDWVETEIDNEAIFPKNPGEPFPPNFEDFVKRILRKLFRVYAHIYYSHFHEIVALNEQAHLNTCFKHFLLFVSEFQLVDKEKEMAPIKSLVETMLDQ.

Residues Cys-81, Cys-86, His-162, and His-167 each contribute to the Zn(2+) site.

The protein belongs to the MOB1/phocein family.

The protein localises to the nucleus. The polypeptide is MOB kinase activator-like 2A (Arabidopsis thaliana (Mouse-ear cress)).